We begin with the raw amino-acid sequence, 246 residues long: DNA-directed RNA polymerase subunit alpha (246 aa).

The protein belongs to the RNA polymerase alpha chain family. In terms of assembly, in plastids the minimal PEP RNA polymerase catalytic core is composed of four subunits: alpha, beta, beta', and beta''. When a (nuclear-encoded) sigma factor is associated with the core the holoenzyme is formed, which can initiate transcription (Potential).

It is found in the plastid. It carries out the reaction RNA(n) + a ribonucleoside 5'-triphosphate = RNA(n+1) + diphosphate. Functionally, DNA-dependent RNA polymerase catalyzes the transcription of DNA into RNA using the four ribonucleoside triphosphates as substrates. In Helicosporidium sp. subsp. Simulium jonesii (Green alga), this protein is DNA-directed RNA polymerase subunit alpha (rpoA).